A 364-amino-acid chain; its full sequence is tRNA 2-selenouridine synthase (364 aa).

The 124-residue stretch at Leu14–Ile137 folds into the Rhodanese domain. Cys97 (S-selanylcysteine intermediate) is an active-site residue.

The protein belongs to the SelU family. Monomer.

The catalysed reaction is 5-methylaminomethyl-2-thiouridine(34) in tRNA + selenophosphate + (2E)-geranyl diphosphate + H2O + H(+) = 5-methylaminomethyl-2-selenouridine(34) in tRNA + (2E)-thiogeraniol + phosphate + diphosphate. It catalyses the reaction 5-methylaminomethyl-2-thiouridine(34) in tRNA + (2E)-geranyl diphosphate = 5-methylaminomethyl-S-(2E)-geranyl-thiouridine(34) in tRNA + diphosphate. It carries out the reaction 5-methylaminomethyl-S-(2E)-geranyl-thiouridine(34) in tRNA + selenophosphate + H(+) = 5-methylaminomethyl-2-(Se-phospho)selenouridine(34) in tRNA + (2E)-thiogeraniol. The enzyme catalyses 5-methylaminomethyl-2-(Se-phospho)selenouridine(34) in tRNA + H2O = 5-methylaminomethyl-2-selenouridine(34) in tRNA + phosphate. Its function is as follows. Involved in the post-transcriptional modification of the uridine at the wobble position (U34) of tRNA(Lys), tRNA(Glu) and tRNA(Gln). Catalyzes the conversion of 2-thiouridine (S2U-RNA) to 2-selenouridine (Se2U-RNA). Acts in a two-step process involving geranylation of 2-thiouridine (S2U) to S-geranyl-2-thiouridine (geS2U) and subsequent selenation of the latter derivative to 2-selenouridine (Se2U) in the tRNA chain. The sequence is that of tRNA 2-selenouridine synthase from Escherichia coli (strain ATCC 8739 / DSM 1576 / NBRC 3972 / NCIMB 8545 / WDCM 00012 / Crooks).